Reading from the N-terminus, the 213-residue chain is Putative protein Brevis radix-like 3 (213 aa).

A disordered region spans residues 7-27; that stretch reads CSSKEGGEDGSRGAATPHGRD. The BRX domain occupies 158 to 213; that stretch reads REWTAQVEPGVQITFVTLPGGGNDLKRIRFSRERFGEDRAKVWWEHNRDRIQAQYL.

The protein belongs to the BRX family.

The protein localises to the nucleus. The chain is Putative protein Brevis radix-like 3 (BRXL3) from Oryza sativa subsp. japonica (Rice).